Consider the following 461-residue polypeptide: tRNA modification GTPase MnmE (461 aa).

Residues arginine 23, glutamate 88, and arginine 127 each coordinate (6S)-5-formyl-5,6,7,8-tetrahydrofolate. A TrmE-type G domain is found at 223 to 383 (GLNTVIVGKP…LKECIKNLFF (161 aa)). Asparagine 233 serves as a coordination point for K(+). GTP is bound by residues 233 to 238 (NVGKSS), 252 to 258 (TEIPGTT), and 277 to 280 (DTAG). Serine 237 is a binding site for Mg(2+). The K(+) site is built by threonine 252, isoleucine 254, and threonine 257. Threonine 258 is a Mg(2+) binding site. Lysine 461 is a (6S)-5-formyl-5,6,7,8-tetrahydrofolate binding site.

It belongs to the TRAFAC class TrmE-Era-EngA-EngB-Septin-like GTPase superfamily. TrmE GTPase family. Homodimer. Heterotetramer of two MnmE and two MnmG subunits. K(+) is required as a cofactor.

The protein resides in the cytoplasm. Its function is as follows. Exhibits a very high intrinsic GTPase hydrolysis rate. Involved in the addition of a carboxymethylaminomethyl (cmnm) group at the wobble position (U34) of certain tRNAs, forming tRNA-cmnm(5)s(2)U34. In Clostridium botulinum (strain Okra / Type B1), this protein is tRNA modification GTPase MnmE.